The sequence spans 30 residues: Cycloviolacin-H3 (30 aa).

The cyclopeptide (Gly-Asn) cross-link spans 1–30 (GLPVCGETCFGGTCNTPGCICDPWPVCTRN). Intrachain disulfides connect cysteine 5-cysteine 19, cysteine 9-cysteine 21, and cysteine 14-cysteine 27.

Post-translationally, this is a cyclic peptide.

In terms of biological role, probably participates in a plant defense mechanism. This Viola hederacea (Australian violet) protein is Cycloviolacin-H3.